The following is a 201-amino-acid chain: Glycerol-3-phosphate acyltransferase (201 aa).

The next 5 membrane-spanning stretches (helical) occupy residues 10-30, 60-80, 86-106, 116-136, and 166-186; these read MLIGALIFGYVLGSIPFGLIL, LAAATLILDALKGTAAALIAA, AAIAAGFGAFIGHLFPVWIGF, LGVLIGLAWAGALVFAAAWIV, and ALAALFAIMTVIVFIKHRANI.

It belongs to the PlsY family. Probably interacts with PlsX.

Its subcellular location is the cell inner membrane. The catalysed reaction is an acyl phosphate + sn-glycerol 3-phosphate = a 1-acyl-sn-glycero-3-phosphate + phosphate. It participates in lipid metabolism; phospholipid metabolism. Functionally, catalyzes the transfer of an acyl group from acyl-phosphate (acyl-PO(4)) to glycerol-3-phosphate (G3P) to form lysophosphatidic acid (LPA). This enzyme utilizes acyl-phosphate as fatty acyl donor, but not acyl-CoA or acyl-ACP. The polypeptide is Glycerol-3-phosphate acyltransferase (Brucella melitensis biotype 2 (strain ATCC 23457)).